We begin with the raw amino-acid sequence, 643 residues long: Threonine--tRNA ligase (643 aa).

The TGS domain maps to 1–61 (MPIITLPDGS…SEDATLEIIT (61 aa)). The segment at 243-534 (DHRKIGKALD…ITEEYAGFFP (292 aa)) is catalytic. Zn(2+) contacts are provided by Cys-334, His-385, and His-511.

The protein belongs to the class-II aminoacyl-tRNA synthetase family. As to quaternary structure, homodimer. The cofactor is Zn(2+).

The protein localises to the cytoplasm. The enzyme catalyses tRNA(Thr) + L-threonine + ATP = L-threonyl-tRNA(Thr) + AMP + diphosphate + H(+). Functionally, catalyzes the attachment of threonine to tRNA(Thr) in a two-step reaction: L-threonine is first activated by ATP to form Thr-AMP and then transferred to the acceptor end of tRNA(Thr). Also edits incorrectly charged L-seryl-tRNA(Thr). This Glaesserella parasuis serovar 5 (strain SH0165) (Haemophilus parasuis) protein is Threonine--tRNA ligase.